We begin with the raw amino-acid sequence, 430 residues long: Ribosomal protein uS12 methylthiotransferase RimO (430 aa).

Residues 4 to 119 (LKINFISLGC…IPVLFDIKPK (116 aa)) enclose the MTTase N-terminal domain. Residues cysteine 13, cysteine 49, cysteine 82, cysteine 141, cysteine 145, and cysteine 148 each coordinate [4Fe-4S] cluster. The Radical SAM core domain maps to 127-358 (STPKHTAYLK…SALQENITEQ (232 aa)). Residues 361-430 (KSLIGKELDI…DKYDVVGEAE (70 aa)) form the TRAM domain.

It belongs to the methylthiotransferase family. RimO subfamily. It depends on [4Fe-4S] cluster as a cofactor.

The protein resides in the cytoplasm. The catalysed reaction is L-aspartate(89)-[ribosomal protein uS12]-hydrogen + (sulfur carrier)-SH + AH2 + 2 S-adenosyl-L-methionine = 3-methylsulfanyl-L-aspartate(89)-[ribosomal protein uS12]-hydrogen + (sulfur carrier)-H + 5'-deoxyadenosine + L-methionine + A + S-adenosyl-L-homocysteine + 2 H(+). Its function is as follows. Catalyzes the methylthiolation of an aspartic acid residue of ribosomal protein uS12. This chain is Ribosomal protein uS12 methylthiotransferase RimO, found in Sulfurihydrogenibium sp. (strain YO3AOP1).